The chain runs to 216 residues: ADP-ribosylation factor D (216 aa).

The segment covering 188-204 has biased composition (low complexity); it reads SKFSFSNKSKQQKSNSQ. Positions 188–216 are disordered; the sequence is SKFSFSNKSKQQKSNSQPNTPRKNIQMMT. Positions 205-216 are enriched in polar residues; sequence PNTPRKNIQMMT.

It belongs to the small GTPase superfamily. Arf family.

It localises to the golgi apparatus. In terms of biological role, GTP-binding protein involved in protein trafficking; may modulate vesicle budding and uncoating within the Golgi apparatus. In Dictyostelium discoideum (Social amoeba), this protein is ADP-ribosylation factor D (arrD).